A 914-amino-acid polypeptide reads, in one-letter code: Isoleucine--tRNA ligase (914 aa).

The 'HIGH' region motif lies at 64-74; sequence PYANGNFHLGH. Residue Glu-557 participates in L-isoleucyl-5'-AMP binding. The 'KMSKS' region motif lies at 598 to 602; it reads PMSKS. Lys-601 is an ATP binding site. Positions 889, 892, 906, and 909 each coordinate Zn(2+).

It belongs to the class-I aminoacyl-tRNA synthetase family. IleS type 1 subfamily. Monomer. Zn(2+) is required as a cofactor.

It is found in the cytoplasm. It carries out the reaction tRNA(Ile) + L-isoleucine + ATP = L-isoleucyl-tRNA(Ile) + AMP + diphosphate. Its function is as follows. Catalyzes the attachment of isoleucine to tRNA(Ile). As IleRS can inadvertently accommodate and process structurally similar amino acids such as valine, to avoid such errors it has two additional distinct tRNA(Ile)-dependent editing activities. One activity is designated as 'pretransfer' editing and involves the hydrolysis of activated Val-AMP. The other activity is designated 'posttransfer' editing and involves deacylation of mischarged Val-tRNA(Ile). In Leptospira interrogans serogroup Icterohaemorrhagiae serovar copenhageni (strain Fiocruz L1-130), this protein is Isoleucine--tRNA ligase.